A 500-amino-acid polypeptide reads, in one-letter code: Phosphatidylserine decarboxylase proenzyme 1, mitochondrial (500 aa).

A mitochondrion; not cleaved when targeted to the endoplasmic reticulum-targeting transit peptide spans 1 to 48 (MSIMPVKNALAQGRTLLMGRMPAVKFSTRMQLRNRTAVLWNRKFSTRL). Asn34 carries an N-linked (GlcNAc...) asparagine glycan. Over 45–79 (STRLFVQQRRSSGEIVDRAKAAAANSGRKQVSMKW) the chain is Mitochondrial matrix. An enables targeting to the endoplasmic reticulum in addition to mitochondria region spans residues 57–101 (GEIVDRAKAAAANSGRKQVSMKWVVLTSFTIVLGTILLVSRNDST). A helical transmembrane segment spans residues 80–98 (VVLTSFTIVLGTILLVSRN). The Mitochondrial intermembrane segment spans residues 99 to 500 (DSTEEDATEG…LGIIGKNDLK (402 aa)). Catalysis depends on charge relay system; for autoendoproteolytic cleavage activity residues Asp210, His348, and Ser463. Residue Ser463 is the Schiff-base intermediate with substrate; via pyruvic acid; for decarboxylase activity of the active site. Ser463 is modified (pyruvic acid (Ser); by autocatalysis). The segment at 475–492 (FKFDVRVGDKVKMGQKLG) is required for processing and stability.

It belongs to the phosphatidylserine decarboxylase family. PSD-B subfamily. Eukaryotic type I sub-subfamily. Heterodimer of a large membrane-associated beta subunit and a small pyruvoyl-containing alpha subunit. Requires pyruvate as cofactor. Glycosylated at Asn-34 in the endoplasmic reticulum. In terms of processing, the precursor is imported via the TOM complex into mitochondria, where the N-terminal presequence is cleaved by the matrix-located proteases MPP (MAS1-MAS2) and OCT1. Post-translationally, is synthesized initially as an inactive proenzyme. Formation of the active enzyme involves a self-maturation process in which the active site pyruvoyl group is generated from an internal serine residue via an autocatalytic post-translational modification. Two non-identical subunits are generated from the proenzyme in this reaction, and the pyruvate is formed at the N-terminus of the alpha chain, which is derived from the carboxyl end of the proenzyme. The autoendoproteolytic cleavage occurs by a canonical serine protease mechanism, in which the side chain hydroxyl group of the serine supplies its oxygen atom to form the C-terminus of the beta chain, while the remainder of the serine residue undergoes an oxidative deamination to produce ammonia and the pyruvoyl prosthetic group on the alpha chain. During this reaction, the Ser that is part of the protease active site of the proenzyme becomes the pyruvoyl prosthetic group, which constitutes an essential element of the active site of the mature decarboxylase.

Its subcellular location is the mitochondrion inner membrane. It is found in the lipid droplet. It localises to the endoplasmic reticulum membrane. It catalyses the reaction a 1,2-diacyl-sn-glycero-3-phospho-L-serine + H(+) = a 1,2-diacyl-sn-glycero-3-phosphoethanolamine + CO2. The protein operates within phospholipid metabolism; phosphatidylethanolamine biosynthesis; phosphatidylethanolamine from CDP-diacylglycerol: step 2/2. Its function is as follows. Catalyzes the formation of phosphatidylethanolamine (PtdEtn) from phosphatidylserine (PtdSer). Plays a central role in phospholipid metabolism and in the interorganelle trafficking of phosphatidylserine. Phosphatidylethanolamine formed in the mitochondria is exported to other membranes to fullfill their requirements for PtdEtn. Required for normal mitochondrial morphology and proper mitochondrial fusion during yeast mating. Involved in lipid droplet biogenesis at the endoplasmic reticulum membrane. Required for induction of mitophagy during nitrogen starvation. Appears to play a specific role in supporting respiratory complex III activity. The protein is Phosphatidylserine decarboxylase proenzyme 1, mitochondrial of Saccharomyces cerevisiae (strain ATCC 204508 / S288c) (Baker's yeast).